Consider the following 130-residue polypeptide: Histone H2A type 2-B (130 aa).

Residues 1–22 (MSGRGKQGGKARAKAKSRSSRA) are disordered. Position 2 is an N-acetylserine (S2). Position 2 is a phosphoserine; by RPS6KA5 (S2). The residue at position 4 (R4) is a Citrulline; alternate. A Symmetric dimethylarginine; by PRMT5; alternate modification is found at R4. Residue K6 is modified to N6-(2-hydroxyisobutyryl)lysine. Residues 7 to 19 (QGGKARAKAKSRS) show a composition bias toward basic residues. Residue K10 is modified to N6-(2-hydroxyisobutyryl)lysine; alternate. K10 and K14 each carry N6-(beta-hydroxybutyryl)lysine; alternate. K10 bears the N6-lactoyllysine; alternate mark. At K10 the chain carries N6-succinyllysine; alternate. A Glycyl lysine isopeptide (Lys-Gly) (interchain with G-Cter in ubiquitin); alternate cross-link involves residue K14. K16 is covalently cross-linked (Glycyl lysine isopeptide (Lys-Gly) (interchain with G-Cter in ubiquitin)). An N6-(2-hydroxyisobutyryl)lysine; alternate modification is found at K37. The residue at position 37 (K37) is an N6-(beta-hydroxybutyryl)lysine; alternate. An N6-crotonyllysine; alternate modification is found at K37. N6-(2-hydroxyisobutyryl)lysine is present on residues K75 and K76. K96 carries the post-translational modification N6-(2-hydroxyisobutyryl)lysine; alternate. At K96 the chain carries N6-(beta-hydroxybutyryl)lysine; alternate. At K96 the chain carries N6-succinyllysine; alternate. Position 96 is an N6-glutaryllysine; alternate (K96). Q105 carries the post-translational modification N5-methylglutamine. K119 carries the N6-(2-hydroxyisobutyryl)lysine; alternate modification. K119 carries the post-translational modification N6-(beta-hydroxybutyryl)lysine; alternate. K119 and K120 each carry N6-crotonyllysine; alternate. K119 and K120 each carry N6-glutaryllysine; alternate. K120 participates in a covalent cross-link: Glycyl lysine isopeptide (Lys-Gly) (interchain with G-Cter in ubiquitin); alternate. T121 bears the Phosphothreonine; by DCAF1 mark.

Belongs to the histone H2A family. In terms of assembly, the nucleosome is a histone octamer containing two molecules each of H2A, H2B, H3 and H4 assembled in one H3-H4 heterotetramer and two H2A-H2B heterodimers. The octamer wraps approximately 147 bp of DNA. In terms of processing, deiminated on Arg-4 in granulocytes upon calcium entry. Post-translationally, monoubiquitination of Lys-120 (H2AK119Ub) by RING1, TRIM37 and RNF2/RING2 complex gives a specific tag for epigenetic transcriptional repression and participates in X chromosome inactivation of female mammals. It is involved in the initiation of both imprinted and random X inactivation. Ubiquitinated H2A is enriched in inactive X chromosome chromatin. Ubiquitination of H2A functions downstream of methylation of 'Lys-27' of histone H3 (H3K27me). H2AK119Ub by RNF2/RING2 can also be induced by ultraviolet and may be involved in DNA repair. Monoubiquitination of Lys-120 (H2AK119Ub) by TRIM37 may promote transformation of cells in a number of breast cancers. Following DNA double-strand breaks (DSBs), it is ubiquitinated through 'Lys-63' linkage of ubiquitin moieties by the E2 ligase UBE2N and the E3 ligases RNF8 and RNF168, leading to the recruitment of repair proteins to sites of DNA damage. Ubiquitination at Lys-14 and Lys-16 (H2AK13Ub and H2AK15Ub, respectively) in response to DNA damage is initiated by RNF168 that mediates monoubiquitination at these 2 sites, and 'Lys-63'-linked ubiquitin are then conjugated to monoubiquitin; RNF8 is able to extend 'Lys-63'-linked ubiquitin chains in vitro. Deubiquitinated by USP51 at Lys-14 and Lys-16 (H2AK13Ub and H2AK15Ub, respectively) after damaged DNA is repaired. H2AK119Ub and ionizing radiation-induced 'Lys-63'-linked ubiquitination (H2AK13Ub and H2AK15Ub) are distinct events. Phosphorylation on Ser-2 (H2AS1ph) is enhanced during mitosis. Phosphorylation on Ser-2 by RPS6KA5/MSK1 directly represses transcription. Acetylation of H3 inhibits Ser-2 phosphorylation by RPS6KA5/MSK1. Phosphorylation at Thr-121 (H2AT120ph) by DCAF1 is present in the regulatory region of many tumor suppresor genes and down-regulates their transcription. In terms of processing, symmetric dimethylation on Arg-4 by the PRDM1/PRMT5 complex may play a crucial role in the germ-cell lineage. Post-translationally, glutamine methylation at Gln-105 (H2AQ104me) by FBL is specifically dedicated to polymerase I. It is present at 35S ribosomal DNA locus and impairs binding of the FACT complex. Crotonylation (Kcr) is specifically present in male germ cells and marks testis-specific genes in post-meiotic cells, including X-linked genes that escape sex chromosome inactivation in haploid cells. Crotonylation marks active promoters and enhancers and confers resistance to transcriptional repressors. It is also associated with post-meiotically activated genes on autosomes. In terms of processing, lactylated in macrophages by EP300/P300 by using lactoyl-CoA directly derived from endogenous or exogenous lactate, leading to stimulates gene transcription.

The protein resides in the nucleus. It is found in the chromosome. Its function is as follows. Core component of nucleosome. Nucleosomes wrap and compact DNA into chromatin, limiting DNA accessibility to the cellular machineries which require DNA as a template. Histones thereby play a central role in transcription regulation, DNA repair, DNA replication and chromosomal stability. DNA accessibility is regulated via a complex set of post-translational modifications of histones, also called histone code, and nucleosome remodeling. This chain is Histone H2A type 2-B, found in Homo sapiens (Human).